A 980-amino-acid chain; its full sequence is Phosphoenolpyruvate carboxylase (980 aa).

Residues histidine 182 and lysine 625 contribute to the active site.

This sequence belongs to the PEPCase type 1 family. Requires Mg(2+) as cofactor.

It carries out the reaction oxaloacetate + phosphate = phosphoenolpyruvate + hydrogencarbonate. Its function is as follows. Forms oxaloacetate, a four-carbon dicarboxylic acid source for the tricarboxylic acid cycle. In Bordetella pertussis (strain Tohama I / ATCC BAA-589 / NCTC 13251), this protein is Phosphoenolpyruvate carboxylase.